Here is a 258-residue protein sequence, read N- to C-terminus: Histidine/lysine/arginine/ornithine transport ATP-binding protein HisP (258 aa).

In terms of domain architecture, ABC transporter spans L7–L253. 6 residues coordinate ATP: S41, G42, G44, K45, S46, and T47.

This sequence belongs to the ABC transporter superfamily. In terms of assembly, the HisPMQJ complex is composed of two ATP-binding proteins (HisP), two transmembrane proteins (HisM and HisQ) and a solute-binding protein (HisJ). The HisPMQ-ArgT complex is composed of two ATP-binding proteins (HisP), two transmembrane proteins (HisM and HisQ) and a solute-binding protein (ArgT).

It localises to the cell inner membrane. It carries out the reaction a polar amino acid(out) + ATP + H2O = a polar amino acid(in) + ADP + phosphate + H(+). It catalyses the reaction L-histidine(out) + ATP + H2O = L-histidine(in) + ADP + phosphate + H(+). The enzyme catalyses L-lysine(out) + ATP + H2O = L-lysine(in) + ADP + phosphate + H(+). The catalysed reaction is L-arginine(out) + ATP + H2O = L-arginine(in) + ADP + phosphate + H(+). It carries out the reaction L-ornithine(out) + ATP + H2O = L-ornithine(in) + ADP + phosphate + H(+). With respect to regulation, isolated, soluble HisP has a very low ATPase activity. ATPase activity is slightly increased in the presence of HisM and HisQ, and strongly increased when HisJ is also present. Part of the ABC transporter complex HisPMQJ involved in histidine transport. Is also part of the ABC transporter complex HisPMQ-ArgT involved in lysine/arginine/ornithine transport. Shows ATPase activity. Responsible for energy coupling to the transport system. In Salmonella typhimurium (strain LT2 / SGSC1412 / ATCC 700720), this protein is Histidine/lysine/arginine/ornithine transport ATP-binding protein HisP.